A 758-amino-acid chain; its full sequence is Phosphoribosylformylglycinamidine synthase subunit PurL (758 aa).

His-57 is an active-site residue. ATP contacts are provided by Tyr-60 and Arg-104. Glu-106 is a Mg(2+) binding site. Residues 107–110 (SHNH) and Arg-129 contribute to the substrate site. The Proton acceptor role is filled by His-108. Asp-130 is a Mg(2+) binding site. Gln-254 provides a ligand contact to substrate. Asp-282 lines the Mg(2+) pocket. 326–328 (ESQ) provides a ligand contact to substrate. Asn-509 and Gly-546 together coordinate ATP. Asn-547 serves as a coordination point for Mg(2+). Ser-549 lines the substrate pocket.

Belongs to the FGAMS family. In terms of assembly, monomer. Part of the FGAM synthase complex composed of 1 PurL, 1 PurQ and 2 PurS subunits.

It localises to the cytoplasm. It catalyses the reaction N(2)-formyl-N(1)-(5-phospho-beta-D-ribosyl)glycinamide + L-glutamine + ATP + H2O = 2-formamido-N(1)-(5-O-phospho-beta-D-ribosyl)acetamidine + L-glutamate + ADP + phosphate + H(+). Its pathway is purine metabolism; IMP biosynthesis via de novo pathway; 5-amino-1-(5-phospho-D-ribosyl)imidazole from N(2)-formyl-N(1)-(5-phospho-D-ribosyl)glycinamide: step 1/2. In terms of biological role, part of the phosphoribosylformylglycinamidine synthase complex involved in the purines biosynthetic pathway. Catalyzes the ATP-dependent conversion of formylglycinamide ribonucleotide (FGAR) and glutamine to yield formylglycinamidine ribonucleotide (FGAM) and glutamate. The FGAM synthase complex is composed of three subunits. PurQ produces an ammonia molecule by converting glutamine to glutamate. PurL transfers the ammonia molecule to FGAR to form FGAM in an ATP-dependent manner. PurS interacts with PurQ and PurL and is thought to assist in the transfer of the ammonia molecule from PurQ to PurL. The sequence is that of Phosphoribosylformylglycinamidine synthase subunit PurL from Corynebacterium ammoniagenes (Brevibacterium ammoniagenes).